A 132-amino-acid chain; its full sequence is Small ribosomal subunit protein uS8 (132 aa).

Belongs to the universal ribosomal protein uS8 family. In terms of assembly, part of the 30S ribosomal subunit. Contacts proteins S5 and S12.

In terms of biological role, one of the primary rRNA binding proteins, it binds directly to 16S rRNA central domain where it helps coordinate assembly of the platform of the 30S subunit. This chain is Small ribosomal subunit protein uS8, found in Xylella fastidiosa (strain M23).